A 178-amino-acid chain; its full sequence is MRRPFKAAAPTKDGPRSNRDIRVPRVQLIDAEGQNRGDVSINDALLLAEEAGLDLVEISPNAVPPVVKILDLGKLKYANQKKAAEARKNQKVIEIKEIKMRPNIDSHDYETKMKAVRRFFEEGDKVKLTLRFRGREMAHMELGMQLLNKVREEVATIAKVEAEPKLEGRQMMMVLAPR.

Residues 1 to 20 (MRRPFKAAAPTKDGPRSNRD) form a disordered region.

Belongs to the IF-3 family. As to quaternary structure, monomer.

The protein resides in the cytoplasm. IF-3 binds to the 30S ribosomal subunit and shifts the equilibrium between 70S ribosomes and their 50S and 30S subunits in favor of the free subunits, thus enhancing the availability of 30S subunits on which protein synthesis initiation begins. In Mesorhizobium japonicum (strain LMG 29417 / CECT 9101 / MAFF 303099) (Mesorhizobium loti (strain MAFF 303099)), this protein is Translation initiation factor IF-3.